The following is a 276-amino-acid chain: Merozoite surface protein 2 (276 aa).

Positions 1–20 are cleaved as a signal peptide; it reads MKVIKTLSIINFFIFVTFNI. 2 N-linked (GlcNAc...) asparagine glycosylation sites follow: asparagine 22 and asparagine 36. Positions 44–202 are polymorphic region; the sequence is AESNPSTGAG…EQTESPELQS (159 aa). Residues 44–242 are disordered; it reads AESNPSTGAG…CTDGNKENCG (199 aa). The span at 51-90 shows a compositional bias: gly residues; sequence GAGGSGSAGGSGSAGGSGSAGGSGSAGGSGSAGSGDGNGA. 5 repeat units span residues 53–58, 59–64, 65–70, 71–76, and 77–82. Residues 53–82 are 5 X 6 AA tandem repeats of G-G-S-G-S-A; that stretch reads GGSGSAGGSGSAGGSGSAGGSGSAGGSGSA. A compositionally biased stretch (low complexity) spans 91 to 127; that stretch reads NPGADAERSPSTPATTTTTTTTNDAEASTSTSSENPN. Composition is skewed to polar residues over residues 143-169, 176-187, and 194-204; these read KPNQ…NVPP, KSPTAQPEQAEN, and QTESPELQSAP. Residue asparagine 153 is glycosylated (N-linked (GlcNAc...) asparagine). Asparagine 225 is a glycosylation site (N-linked (GlcNAc...) asparagine). Positions 229–238 are enriched in basic and acidic residues; sequence SQKECTDGNK. Cysteine 233 and cysteine 241 are joined by a disulfide. A glycan (N-linked (GlcNAc...) asparagine) is linked at asparagine 250. Residue asparagine 250 is the site of GPI-anchor amidated asparagine attachment. The propeptide at 251 to 276 is removed in mature form; sequence SSNIASINKFVVLISATLVLSFAIFI.

It is found in the cell membrane. Functionally, may play a role in the merozoite attachment to the erythrocyte. This Plasmodium falciparum (isolate 7G8) protein is Merozoite surface protein 2.